Consider the following 196-residue polypeptide: Peptidyl-tRNA hydrolase (196 aa).

Y21 lines the tRNA pocket. H26 serves as the catalytic Proton acceptor. TRNA-binding residues include F72, N74, and N120.

This sequence belongs to the PTH family. As to quaternary structure, monomer.

Its subcellular location is the cytoplasm. It catalyses the reaction an N-acyl-L-alpha-aminoacyl-tRNA + H2O = an N-acyl-L-amino acid + a tRNA + H(+). Its function is as follows. Hydrolyzes ribosome-free peptidyl-tRNAs (with 1 or more amino acids incorporated), which drop off the ribosome during protein synthesis, or as a result of ribosome stalling. Catalyzes the release of premature peptidyl moieties from peptidyl-tRNA molecules trapped in stalled 50S ribosomal subunits, and thus maintains levels of free tRNAs and 50S ribosomes. The sequence is that of Peptidyl-tRNA hydrolase from Mycobacteroides abscessus (strain ATCC 19977 / DSM 44196 / CCUG 20993 / CIP 104536 / JCM 13569 / NCTC 13031 / TMC 1543 / L948) (Mycobacterium abscessus).